Reading from the N-terminus, the 398-residue chain is LIM/homeobox protein Lhx3 (398 aa).

2 consecutive LIM zinc-binding domains span residues 28–78 and 87–141; these read CAGC…CKDD and CAAC…CKAD. Positions 154–213 form a DNA-binding region, homeobox; sequence AKRPRTTITAKQLETLKNAYNNSPKPARHVREQLSTETGLDMRVVQVWFQNRRAKEKRLK. Disordered regions lie at residues 208–294 and 307–398; these read KEKR…FPLE and DIQA…HAQF. The span at 272 to 282 shows a compositional bias: low complexity; sequence SSLSESSPALS.

Its subcellular location is the nucleus. Functionally, transcription factor. The protein is LIM/homeobox protein Lhx3 (lhx3) of Danio rerio (Zebrafish).